The chain runs to 503 residues: MENLSDRFNVLQDQLMNIYESAANTIESQIEHWQTLRKEAVLLYFARQKGVTRLGYQYVPPLAVSESRAKQAIGMMLQLQSLQKSEYAKEPWSLVDTSAETFRSPPENHFKKGPVSVEVIYDNDKDNANAYTMWRYVYYVDDDDQWHKSPSGVNHTGIYFMQGTFRHYYVLFADDASRYSRTGHWEVNVNKETVFAPVTSSTPPDSPGGQADSNTSSTTPATTTDSTSRLSSTRKQSQQTNTKGRRYGRRPSSRTRRTTQTHQRRRSRSKSRSRSRSRSRLRSRSRSRSRSYSRSRSQSSDQPQYRFRSGGQVSLITTATTTTTTATNYSTRGSGRGSSSTSSSTSKRPRRPRGGAIGGSSGRGRRSSSTSPSPSKRSRGKSESVRQRGISPDDVGKSLQSVSTRNTGRLGRLLDEALDPPVILVRGEPNTLKCFRNRAKLKYAGLYKAFSTAWSWVAGDGTERLGRSRMLISFFSFEQRKDFDKTVKYPKGVDRSYGSFDSL.

The interval 1–201 (MENLSDRFNV…ETVFAPVTSS (201 aa)) is transactivation domain. The interval 196 to 404 (APVTSSTPPD…VGKSLQSVST (209 aa)) is disordered. Low complexity predominate over residues 213 to 234 (SNTSSTTPATTTDSTSRLSSTR). Over residues 243–293 (KGRRYGRRPSSRTRRTTQTHQRRRSRSKSRSRSRSRSRLRSRSRSRSRSYS) the composition is skewed to basic residues. Residues 317–346 (TTATTTTTTATNYSTRGSGRGSSSTSSSTS) are compositionally biased toward low complexity. Residues 419–503 (DPPVILVRGE…DRSYGSFDSL (85 aa)) are DNA-binding domain.

This sequence belongs to the papillomaviridae E2 protein family. As to quaternary structure, binds DNA as homodimer. Interacts with protein E1; this interaction greatly increases E1 DNA-binding activity. Interacts with protein L1; this interaction enhances E2-dependent replication and transcription activation. Interacts with protein L2; this interaction inhibits E2 transcriptional activity but not DNA replication function E2. Interacts with protein E7; this interaction inhibits E7 oncogenic activity. Interacts with host TAF1; this interaction modulates E2-dependent transcriptional regulation. Interacts with host BRD4; this interaction mediates E2 transcriptional activation function. Additionally, the interaction with host BRD4 on mitotic chromosomes mediates tethering of the viral genome. Interacts with host TOPBP1; this interaction is required for optimal viral DNA replication. Post-translationally, phosphorylated.

It is found in the host nucleus. Its function is as follows. Plays a role in the initiation of viral DNA replication. A dimer of E2 interacts with a dimer of E1 in order to improve specificity of E1 DNA binding activity. Once the complex recognizes and binds DNA at specific sites, the E2 dimer is removed from DNA. E2 also regulates viral transcription through binding to the E2RE response element (5'-ACCNNNNNNGGT-3') present in multiple copies in the regulatory regions of the viral genome. Activates or represses transcription depending on E2RE's position with regards to proximal promoter elements including the TATA-box. Repression occurs by sterically hindering the assembly of the transcription initiation complex. This Human papillomavirus 21 protein is Regulatory protein E2.